We begin with the raw amino-acid sequence, 500 residues long: Ent-kaurene oxidase P450-4 (500 aa).

A helical membrane pass occupies residues V6–L26. The N-linked (GlcNAc...) asparagine glycan is linked to N240. C441 provides a ligand contact to heme. An N-linked (GlcNAc...) asparagine glycan is attached at N475.

This sequence belongs to the cytochrome P450 family. Heme is required as a cofactor.

The protein localises to the membrane. It catalyses the reaction ent-kaur-16-ene + 3 reduced [NADPH--hemoprotein reductase] + 3 O2 = ent-kaur-16-en-19-oate + 3 oxidized [NADPH--hemoprotein reductase] + 4 H2O + 4 H(+). Its pathway is plant hormone biosynthesis; gibberellin biosynthesis. Ent-kaurene oxidase; part of the gene cluster that mediates the biosynthesis of gibberellins (GAs), diterpenoids that may provide a selective advantage during infection of the preferred host plant, rice. Gibberellins (GAs) are diterpenoids and are synthesized via the mevalonate pathway. Biosynthesis of the major metabolite GA3 (gibberellic acid) from geranylgeranyl diphosphate (GGPP) requires 13 steps. The GGPP produced by the geranylgeranyl diphosphate synthase GGS2 is converted to ent-kaurene via ent-copalyldiphosphate in a two-step cyclization reaction performed by the bifunctional ent-copalyl diphosphate synthase/ent-kaurene synthase enzyme (CPS/KS). Ent-Kaurene is metabolized to GAs by a series of oxidation reactions catalyzed by cytochrome P450 monooxygenases. Cytochrome P450 monooxygenase P450-4 is an ent-kaurene oxidase that catalyzes the three oxidation steps between ent-kaurene and ent-kaurenoic acid. The highly multifunctional cytochrome P450 monooxygenase P450-1 then catalyzes four steps involving oxidation at two carbon atoms, in the main pathway from ent-kaurenoic acid to GA14 via GA12-aldehyde as well as producing kaurenolides and fujenoic acids as by-products. The cytochrome P450 monooxygenase P450-2 then converts GA14 to GA4 by removal of C-20. GA4 is further converted to GA7 by the GA4 desaturase DES via 1,2-desaturation before cytochrome P450 monooxygenase P450-3, a 13-hydroxylase, hydroxylates GA7 to GA3, the final product of the GA-biosynthetic pathway. The chain is Ent-kaurene oxidase P450-4 from Gibberella fujikuroi (strain CBS 195.34 / IMI 58289 / NRRL A-6831) (Bakanae and foot rot disease fungus).